Consider the following 327-residue polypeptide: Complex I intermediate-associated protein 30, mitochondrial (327 aa).

A mitochondrion-targeting transit peptide spans Met1–Leu24. Residues Pro42 to His63 are disordered. Residues Arg53–His63 are compositionally biased toward basic and acidic residues. Ser318 carries the post-translational modification Phosphoserine.

The protein belongs to the CIA30 family. Part of the mitochondrial complex I assembly/MCIA complex that comprises at least the core subunits TMEM126B, NDUFAF1, ECSIT and ACAD9 and complement subunits such as COA1 and TMEM186. Interacts with ECSIT. Interacts with ACAD9. At early stages of complex I assembly, it is found in intermediate subcomplexes that contain different subunits including NDUFB6, NDUFA6, NDUFA9, NDUFS3, NDUFS7, ND1, ND2 and ND3. Interacts with TMEM70 and TMEM242.

It is found in the mitochondrion. The protein localises to the mitochondrion matrix. As part of the MCIA complex, involved in the assembly of the mitochondrial complex I. The sequence is that of Complex I intermediate-associated protein 30, mitochondrial from Pan troglodytes (Chimpanzee).